Consider the following 85-residue polypeptide: Large ribosomal subunit protein bL27 (85 aa).

This sequence belongs to the bacterial ribosomal protein bL27 family.

This chain is Large ribosomal subunit protein bL27, found in Azobacteroides pseudotrichonymphae genomovar. CFP2.